A 354-amino-acid polypeptide reads, in one-letter code: Serum paraoxonase/arylesterase 2 (354 aa).

Residues C42 and C352 are joined by a disulfide bond. Residues D53 and D54 each contribute to the Ca(2+) site. Residue H114 is the Proton acceptor of the active site. Residues I116, N167, D168, and N223 each coordinate Ca(2+). Residue N254 is glycosylated (N-linked (GlcNAc...) asparagine). Residues D268 and N269 each contribute to the Ca(2+) site. N-linked (GlcNAc...) asparagine glycosylation is found at N269 and N323.

It belongs to the paraoxonase family. Homotrimer. Requires Ca(2+) as cofactor. Post-translationally, glycosylated. In terms of processing, the signal sequence is not cleaved.

The protein resides in the membrane. The catalysed reaction is a phenyl acetate + H2O = a phenol + acetate + H(+). The enzyme catalyses an N-acyl-L-homoserine lactone + H2O = an N-acyl-L-homoserine + H(+). Capable of hydrolyzing lactones and a number of aromatic carboxylic acid esters. This Canis lupus familiaris (Dog) protein is Serum paraoxonase/arylesterase 2 (PON2).